Reading from the N-terminus, the 431-residue chain is tRNA-2-methylthio-N(6)-dimethylallyladenosine synthase (431 aa).

The MTTase N-terminal domain occupies 4 to 120; it reads RAVYIKTFGC…IENIIENQVS (117 aa). [4Fe-4S] cluster contacts are provided by C13, C49, C83, C154, C158, and C161. The Radical SAM core domain maps to 140-367; the sequence is RKDCVKAWVN…LKLQDEITER (228 aa). The region spanning 370-430 is the TRAM domain; the sequence is KRLEGKIQEV…RHSLEGDIIS (61 aa).

It belongs to the methylthiotransferase family. MiaB subfamily. In terms of assembly, monomer. Requires [4Fe-4S] cluster as cofactor.

It is found in the cytoplasm. The enzyme catalyses N(6)-dimethylallyladenosine(37) in tRNA + (sulfur carrier)-SH + AH2 + 2 S-adenosyl-L-methionine = 2-methylsulfanyl-N(6)-dimethylallyladenosine(37) in tRNA + (sulfur carrier)-H + 5'-deoxyadenosine + L-methionine + A + S-adenosyl-L-homocysteine + 2 H(+). Functionally, catalyzes the methylthiolation of N6-(dimethylallyl)adenosine (i(6)A), leading to the formation of 2-methylthio-N6-(dimethylallyl)adenosine (ms(2)i(6)A) at position 37 in tRNAs that read codons beginning with uridine. The protein is tRNA-2-methylthio-N(6)-dimethylallyladenosine synthase of Thermodesulfovibrio yellowstonii (strain ATCC 51303 / DSM 11347 / YP87).